We begin with the raw amino-acid sequence, 541 residues long: MEFPYHSTVSYNGVTFYFNERATRAYFICGGCLISIPRKHGGEIAKFGHVVRGVGPGDRSVASYVRSELNRTGKTWAVSSNNNCVFLDRVALLAAGSGAVDRDLCGTFDVEVEDPTLADYLVSLPVTHLTLVAGVDVTRENKLKLFPTPTAINTTNGFMYVPNEASFSLVYMRMLELPEGLQELVSGLFDGTPEIRDALNGSNDDEKTSIIVSRRAADVVTEDVKADDVPISGEPYSEKQPRRRKKSDHITLSNFVQIRTIPRVMDIWDPRHKATTHCIRALSCAVFFADEVIFKARKWPGLEDELNEARETIYTAVVAVYGERGELPFFGHAYGRDLTSCQRFVIVQYILSRWEAFNCYAVIEDLTRSYVNALPSDDDTDQVAQDLIRTIVDTANSLLREVGFIGTLAETLLFLPLPQLPCYKETSHLAKKEGVRILRLAKTGVGLSDTVPVDVSVTERHEYEISRYLDTLYSGDPCYNGAVRLCRLLGSSIPIALYYNTISGNAFEPYFAGRRYIAYLGALFFGRVHQTPFGDGKKTQR.

The protein belongs to the alphaherpesvirinae UL21 protein family. Interacts (via C-terminus) with UL16.

Its subcellular location is the virion tegument. It localises to the host cytoplasm. It is found in the host nucleus. Its function is as follows. May participate in DNA packaging/capsid maturation events. Promotes efficient incorporation of tegument proteins UL46, UL49, and US3 homologs into virions. May also play a role in capsid transport to the trans-Golgi network (TGN). This Varicella-zoster virus (strain Oka vaccine) (HHV-3) protein is Tegument protein UL21 homolog.